The sequence spans 229 residues: Sodium channel modifier 1 (229 aa).

Ser-2 is modified (phosphoserine). The short motif at Lys-4 to Arg-20 is the Bipartite nuclear localization signal element. Residues Phe-42–Leu-74 form a Matrin-type zinc finger. A Glycyl lysine isopeptide (Lys-Gly) (interchain with G-Cter in SUMO2) cross-link involves residue Lys-67. Disordered stretches follow at residues Gln-80 to Leu-105 and Arg-128 to Arg-187. A compositionally biased stretch (polar residues) spans Gly-82 to Gln-92. Positions Ile-157–Glu-171 are enriched in basic and acidic residues. Ser-182 and Ser-218 each carry phosphoserine. The required for interaction with LUC7L2 stretch occupies residues Arg-187–Asp-229.

As to quaternary structure, component of the minor spliceosome. Within this complex, interacts with RNF113A, as well as with SF3B1/SF3b155, SF3B2/SF3b145, SF3B3/SF3b130 and CDC5L. May interact with LUC7L2 and SNRNP70.

The protein localises to the nucleus. Its subcellular location is the nucleoplasm. It is found in the nucleus speckle. In terms of biological role, as a component of the minor spliceosome, involved in the splicing of U12-type introns in pre-mRNAs. Plays a role in the regulation of primary cilia length and Hedgehog signaling. The sequence is that of Sodium channel modifier 1 (Scnm1) from Mus musculus (Mouse).